We begin with the raw amino-acid sequence, 94 residues long: Large ribosomal subunit protein uL23 (94 aa).

Belongs to the universal ribosomal protein uL23 family. Part of the 50S ribosomal subunit. Contacts protein L29, and trigger factor when it is bound to the ribosome.

In terms of biological role, one of the early assembly proteins it binds 23S rRNA. One of the proteins that surrounds the polypeptide exit tunnel on the outside of the ribosome. Forms the main docking site for trigger factor binding to the ribosome. This Dehalococcoides mccartyi (strain ATCC BAA-2266 / KCTC 15142 / 195) (Dehalococcoides ethenogenes (strain 195)) protein is Large ribosomal subunit protein uL23.